We begin with the raw amino-acid sequence, 462 residues long: Metal cation symporter ZIP8 (462 aa).

An N-terminal signal peptide occupies residues Met1–Gly19. The Extracellular portion of the chain corresponds to Arg20–Gly132. N-linked (GlcNAc...) asparagine glycans are attached at residues Asn40, Asn88, and Asn96. Residues Phe133–Ile153 form a helical membrane-spanning segment. Over Lys154–Lys160 the chain is Cytoplasmic. A helical membrane pass occupies residues Ile161–Leu181. The Extracellular portion of the chain corresponds to Ile182–Lys191. Residues Ile192–Val212 form a helical membrane-spanning segment. The Cytoplasmic segment spans residues Glu213 to Ala367. The XEXPHE-motif motif lies at Glu345–Glu350. The helical transmembrane segment at Leu368 to Val388 threads the bilayer. The Extracellular portion of the chain corresponds to Gly389–Asn390. The chain crosses the membrane as a helical span at residues Asn391–Ala411. The Cytoplasmic segment spans residues Asp412–Asp431. The helical transmembrane segment at Phe432–Ile452 threads the bilayer. Topologically, residues Thr453–Gln462 are extracellular.

It belongs to the ZIP transporter (TC 2.A.5) family. In terms of assembly, homodimer. In terms of processing, N-glycosylated. N-glycosylation is not required for proper iron and zinc transport.

The protein resides in the cell membrane. The protein localises to the lysosome membrane. Its subcellular location is the apical cell membrane. It localises to the basolateral cell membrane. The enzyme catalyses Zn(2+)(out) + 2 hydrogencarbonate(out) = Zn(2+)(in) + 2 hydrogencarbonate(in). The catalysed reaction is selenite(out) + Zn(2+)(out) + hydrogencarbonate(out) = selenite(in) + Zn(2+)(in) + hydrogencarbonate(in). It carries out the reaction Mn(2+)(out) + 2 hydrogencarbonate(out) = Mn(2+)(in) + 2 hydrogencarbonate(in). It catalyses the reaction Fe(2+)(out) + 2 hydrogencarbonate(out) = Fe(2+)(in) + 2 hydrogencarbonate(in). The enzyme catalyses Cd(2+)(out) + 2 hydrogencarbonate(out) = Cd(2+)(in) + 2 hydrogencarbonate(in). The catalysed reaction is Co(2+)(out) + 2 hydrogencarbonate(out) = Co(2+)(in) + 2 hydrogencarbonate(in). Electroneutral divalent metal cation:bicarbonate symporter of the plasma membrane mediating the cellular uptake of zinc and manganese, two divalent metal cations important for development, tissue homeostasis and immunity. Transports an electroneutral complex composed of a divalent metal cation and two bicarbonate anions or alternatively a bicarbonate and a selenite anion. Thereby, it also contributes to the cellular uptake of selenium, an essential trace metal and micronutrient. Also imports cadmium a non-essential metal which is cytotoxic and carcinogenic. May also transport iron and cobalt through membranes. Through zinc import, indirectly regulates the metal-dependent transcription factor MTF1 and the expression of some metalloproteases involved in cartilage catabolism and also probably heart development. Also indirectly regulates the expression of proteins involved in cell morphology and cytoskeleton organization. Indirectly controls innate immune function and inflammatory response by regulating zinc cellular uptake which in turn modulates the expression of genes specific of these processes. Protects, for instance, cells from injury and death at the onset of inflammation. By regulating zinc influx into monocytes also directly modulates their adhesion to endothelial cells and arteries. Reclaims manganese from the bile at the apical membrane of hepatocytes, thereby regulating the activity of the manganese-dependent enzymes through the systemic levels of the nutrient. Also participates in manganese reabsorption in the proximal tubule of the kidney. By mediating the extracellular uptake of manganese by cells of the blood-brain barrier, may also play a role in the transport of the micronutrient to the brain. With manganese cellular uptake also participates in mitochondrial proper function. Finally, also probably functions intracellularly, translocating zinc from lysosome to cytosol to indirectly enhance the expression of specific genes during TCR-mediated T cell activation. This Rattus norvegicus (Rat) protein is Metal cation symporter ZIP8.